The chain runs to 352 residues: Delta(7)-sterol 5(6)-desaturas erg3A (352 aa).

N-linked (GlcNAc...) asparagine glycosylation is present at Asn39. Helical transmembrane passes span 82–102, 128–147, and 167–187; these read FLSFFLIVWIFGIIVYFISAT, IAQTMRSMPVMSLLTAPFLV, and YYSILQFPLFIAFTDFCIYWI. Residues 174-299 form the Fatty acid hydroxylase domain; that stretch reads PLFIAFTDFC…FTTLWDRLGG (126 aa). The short motif at 188–192 is the Histidine box-1 element; that stretch reads HRGLH. The short motif at 201-205 is the Histidine box-2 element; the sequence is HKPHH. A helical transmembrane segment spans residues 231–251; sequence HVFPFIFPLQKLAYVFLFGFI. The Histidine box-3 signature appears at 276-280; the sequence is HTMHH.

This sequence belongs to the sterol desaturase family. Fe cation serves as cofactor.

It localises to the endoplasmic reticulum membrane. Functionally, delta(7)-sterol 5(6)-desaturase; part of the third module of ergosterol biosynthesis pathway that includes the late steps of the pathway. Erg3A is a minor delta(7)-sterol 5(6)-desaturase within the ergosterol pathway, erg3B being the major one. The third module or late pathway involves the ergosterol synthesis itself through consecutive reactions that mainly occur in the endoplasmic reticulum (ER) membrane. Firstly, the squalene synthase erg9 catalyzes the condensation of 2 farnesyl pyrophosphate moieties to form squalene, which is the precursor of all steroids. Squalene synthase is crucial for balancing the incorporation of farnesyl diphosphate (FPP) into sterol and nonsterol isoprene synthesis. Secondly, squalene is converted into lanosterol by the consecutive action of the squalene epoxidase erg1 and the lanosterol synthase erg7. Then, the delta(24)-sterol C-methyltransferase erg6 methylates lanosterol at C-24 to produce eburicol. Eburicol is the substrate of the sterol 14-alpha demethylase encoded by cyp51A and cyp51B, to yield 4,4,24-trimethyl ergosta-8,14,24(28)-trienol. The C-14 reductase erg24 then reduces the C14=C15 double bond which leads to 4,4-dimethylfecosterol. A sequence of further demethylations at C-4, involving the C-4 demethylation complex containing the C-4 methylsterol oxidases erg25A or erg25B, the sterol-4-alpha-carboxylate 3-dehydrogenase erg26 and the 3-keto-steroid reductase erg27, leads to the production of fecosterol via 4-methylfecosterol. The C-8 sterol isomerase erg2 then catalyzes the reaction which results in unsaturation at C-7 in the B ring of sterols and thus converts fecosterol to episterol. The sterol-C5-desaturase erg3B then catalyzes the introduction of a C-5 double bond in the B ring to produce 5-dehydroepisterol. The 2 other sterol-C5-desaturases, erg3A and erg3C, seem to be less important in ergosterol biosynthesis. The C-22 sterol desaturase erg5 further converts 5-dehydroepisterol into ergosta-5,7,22,24(28)-tetraen-3beta-ol by forming the C-22(23) double bond in the sterol side chain. Finally, ergosta-5,7,22,24(28)-tetraen-3beta-ol is substrate of the C-24(28) sterol reductases erg4A and erg4B to produce ergosterol. Possible alternative sterol biosynthetic pathways might exist from fecosterol to ergosterol, depending on the activities of the erg3 isoforms. The polypeptide is Delta(7)-sterol 5(6)-desaturas erg3A (Aspergillus fumigatus (strain ATCC MYA-4609 / CBS 101355 / FGSC A1100 / Af293) (Neosartorya fumigata)).